Here is a 176-residue protein sequence, read N- to C-terminus: Adenine phosphoribosyltransferase (176 aa).

Belongs to the purine/pyrimidine phosphoribosyltransferase family. In terms of assembly, homodimer.

It localises to the cytoplasm. It carries out the reaction AMP + diphosphate = 5-phospho-alpha-D-ribose 1-diphosphate + adenine. The protein operates within purine metabolism; AMP biosynthesis via salvage pathway; AMP from adenine: step 1/1. Catalyzes a salvage reaction resulting in the formation of AMP, that is energically less costly than de novo synthesis. The sequence is that of Adenine phosphoribosyltransferase from Borreliella afzelii (strain PKo) (Borrelia afzelii).